Here is a 128-residue protein sequence, read N- to C-terminus: Light-regulated protein, chloroplastic (128 aa).

2 tandem repeats follow at residues 58-72 and 111-125. The interval 58-125 is 2 X 15 AA approximate repeats; the sequence is VFPMEACDLI…ACDDLGGEFC (68 aa).

Component of high molecular weight thylakoid LFNRs-containing protein complexes containing LIR1, LFNR1, LFNR2, TIC62 and TROL proteins. Interacts directly with LFNR1 and LFNR2; LIR1 increases the affinity of LFNR1 and LFNR2 for TIC62 and subsequent thylakoid relocalization. Post-translationally, may form interchain disulfide bonds with LFNR1 and LFNR2.

The protein localises to the plastid. Its subcellular location is the chloroplast thylakoid membrane. The protein resides in the chloroplast envelope. It is found in the chloroplast stroma. Functionally, thylakoid-determinant subunit of high molecular weight LFNRs-containing protein complexes. The chain is Light-regulated protein, chloroplastic (LIR1) from Oryza sativa subsp. japonica (Rice).